The sequence spans 258 residues: Imidazole glycerol phosphate synthase subunit HisF (258 aa).

Catalysis depends on residues aspartate 11 and aspartate 130.

The protein belongs to the HisA/HisF family. As to quaternary structure, heterodimer of HisH and HisF.

It is found in the cytoplasm. It carries out the reaction 5-[(5-phospho-1-deoxy-D-ribulos-1-ylimino)methylamino]-1-(5-phospho-beta-D-ribosyl)imidazole-4-carboxamide + L-glutamine = D-erythro-1-(imidazol-4-yl)glycerol 3-phosphate + 5-amino-1-(5-phospho-beta-D-ribosyl)imidazole-4-carboxamide + L-glutamate + H(+). The protein operates within amino-acid biosynthesis; L-histidine biosynthesis; L-histidine from 5-phospho-alpha-D-ribose 1-diphosphate: step 5/9. In terms of biological role, IGPS catalyzes the conversion of PRFAR and glutamine to IGP, AICAR and glutamate. The HisF subunit catalyzes the cyclization activity that produces IGP and AICAR from PRFAR using the ammonia provided by the HisH subunit. The polypeptide is Imidazole glycerol phosphate synthase subunit HisF (Salmonella agona (strain SL483)).